The chain runs to 149 residues: SsrA-binding protein (149 aa).

This sequence belongs to the SmpB family.

Its subcellular location is the cytoplasm. Required for rescue of stalled ribosomes mediated by trans-translation. Binds to transfer-messenger RNA (tmRNA), required for stable association of tmRNA with ribosomes. tmRNA and SmpB together mimic tRNA shape, replacing the anticodon stem-loop with SmpB. tmRNA is encoded by the ssrA gene; the 2 termini fold to resemble tRNA(Ala) and it encodes a 'tag peptide', a short internal open reading frame. During trans-translation Ala-aminoacylated tmRNA acts like a tRNA, entering the A-site of stalled ribosomes, displacing the stalled mRNA. The ribosome then switches to translate the ORF on the tmRNA; the nascent peptide is terminated with the 'tag peptide' encoded by the tmRNA and targeted for degradation. The ribosome is freed to recommence translation, which seems to be the essential function of trans-translation. In Fervidobacterium nodosum (strain ATCC 35602 / DSM 5306 / Rt17-B1), this protein is SsrA-binding protein.